A 132-amino-acid polypeptide reads, in one-letter code: Small ribosomal subunit protein uS8 (132 aa).

The protein belongs to the universal ribosomal protein uS8 family. As to quaternary structure, part of the 30S ribosomal subunit. Contacts proteins S5 and S12.

One of the primary rRNA binding proteins, it binds directly to 16S rRNA central domain where it helps coordinate assembly of the platform of the 30S subunit. This chain is Small ribosomal subunit protein uS8, found in Listeria innocua serovar 6a (strain ATCC BAA-680 / CLIP 11262).